The primary structure comprises 146 residues: Aspartate carbamoyltransferase regulatory chain (146 aa).

Zn(2+) is bound by residues Cys-102, Cys-107, Cys-131, and Cys-134.

Belongs to the PyrI family. Contains catalytic and regulatory chains. It depends on Zn(2+) as a cofactor.

In terms of biological role, involved in allosteric regulation of aspartate carbamoyltransferase. In Clostridium acetobutylicum (strain ATCC 824 / DSM 792 / JCM 1419 / IAM 19013 / LMG 5710 / NBRC 13948 / NRRL B-527 / VKM B-1787 / 2291 / W), this protein is Aspartate carbamoyltransferase regulatory chain.